Reading from the N-terminus, the 177-residue chain is Probable phospholipid hydroperoxide glutathione peroxidase (177 aa).

Residue Cys-42 is part of the active site.

Belongs to the glutathione peroxidase family.

It is found in the cytoplasm. The catalysed reaction is a hydroperoxy polyunsaturated fatty acid + 2 glutathione = a hydroxy polyunsaturated fatty acid + glutathione disulfide + H2O. Its function is as follows. Protects cells and enzymes from oxidative damage, by catalyzing the reduction of hydrogen peroxide, lipid peroxides and organic hydroperoxide, by glutathione. The sequence is that of Probable phospholipid hydroperoxide glutathione peroxidase from Encephalitozoon cuniculi (strain GB-M1) (Microsporidian parasite).